Reading from the N-terminus, the 239-residue chain is Ribitol-5-phosphate cytidylyltransferase (239 aa).

Residues 7–10 and 80–86 contribute to the CTP site; these read FAGG and GETGQMS.

The protein belongs to the IspD/TarI cytidylyltransferase family. TarI subfamily.

It carries out the reaction D-ribitol 5-phosphate + CTP + H(+) = CDP-L-ribitol + diphosphate. Its pathway is cell wall biogenesis; poly(ribitol phosphate) teichoic acid biosynthesis. Catalyzes the transfer of the cytidylyl group of CTP to D-ribitol 5-phosphate. The polypeptide is Ribitol-5-phosphate cytidylyltransferase (Streptococcus agalactiae serotype Ia (strain ATCC 27591 / A909 / CDC SS700)).